An 842-amino-acid polypeptide reads, in one-letter code: Netrin receptor UNC5A (842 aa).

A signal peptide spans Met-1 to Ala-25. Over Gln-26–Tyr-306 the chain is Extracellular. The 98-residue stretch at Pro-44–Tyr-141 folds into the Ig-like domain. Intrachain disulfides connect Cys-65–Cys-126, Cys-77–Cys-124, and Cys-170–Cys-221. 2 N-linked (GlcNAc...) asparagine glycosylation sites follow: Asn-107 and Asn-218. The Ig-like C2-type domain occupies Pro-155–Ser-234. Positions Asp-242–Val-294 constitute a TSP type-1 domain. 3 C-linked (Man) tryptophan glycosylation sites follow: Trp-245, Trp-248, and Trp-251. 3 disulfides stabilise this stretch: Cys-254-Cys-288, Cys-258-Cys-293, and Cys-266-Cys-278. Asn-287 carries N-linked (GlcNAc...) asparagine glycosylation. A helical transmembrane segment spans residues Val-307–Tyr-327. The Cytoplasmic portion of the chain corresponds to Cys-328–Cys-842. The region spanning Asn-441–Ala-584 is the ZU5 domain. The segment at Ser-605–Lys-623 is interaction with DCC. In terms of domain architecture, Death spans Gln-761–Glu-841.

Belongs to the unc-5 family. As to quaternary structure, homodimer and homooligomer. Interacts with the cytoplasmic part of DCC. Interacts with MAGED1. Interacts with PRKCABP, possibly mediating some interaction with PKC. Interacts (via extracellular domain) with FLRT2 (via extracellular domain). Interacts (via extracellular domain) with FLRT3 (via extracellular domain). Phosphorylated on cytoplasmic tyrosine residues. Phosphorylated by PKC in vitro. In terms of processing, proteolytically cleaved by caspases during apoptosis. The cleavage does not take place when the receptor is associated with netrin ligand. Its cleavage by caspases is required to induce apoptosis. Post-translationally, the two extracellular TSRs of UNC5A contain WxxWxxWxxC motifs that can be C-mannosylated on all tryptophans. DPY19L1 preferentially mannosylates the first two tryptophans and DPY19L3 prefers the third. C-mannosylation by DPY19L1 is required for transport of UNC5A from the endoplasmic reticulum to the cell surface.

Its subcellular location is the cell membrane. It is found in the membrane raft. It localises to the cell projection. The protein resides in the neuron projection. In terms of biological role, receptor for netrin required for axon guidance. Functions in the netrin signaling pathway and promotes neurite outgrowth in response to NTN1. Mediates axon repulsion of neuronal growth cones in the developing nervous system in response to netrin. Axon repulsion in growth cones may be mediated by its association with DCC that may trigger signaling for repulsion. It also acts as a dependence receptor required for apoptosis induction when not associated with netrin ligand. The chain is Netrin receptor UNC5A (UNC5A) from Homo sapiens (Human).